We begin with the raw amino-acid sequence, 273 residues long: Ribosomal RNA small subunit methyltransferase A (273 aa).

S-adenosyl-L-methionine-binding residues include Asn18, Leu20, Gly45, Glu66, Asp91, and Asn113.

It belongs to the class I-like SAM-binding methyltransferase superfamily. rRNA adenine N(6)-methyltransferase family. RsmA subfamily.

It is found in the cytoplasm. The catalysed reaction is adenosine(1518)/adenosine(1519) in 16S rRNA + 4 S-adenosyl-L-methionine = N(6)-dimethyladenosine(1518)/N(6)-dimethyladenosine(1519) in 16S rRNA + 4 S-adenosyl-L-homocysteine + 4 H(+). In terms of biological role, specifically dimethylates two adjacent adenosines (A1518 and A1519) in the loop of a conserved hairpin near the 3'-end of 16S rRNA in the 30S particle. May play a critical role in biogenesis of 30S subunits. This Shigella flexneri protein is Ribosomal RNA small subunit methyltransferase A.